The sequence spans 655 residues: Protein-glucosylgalactosylhydroxylysine glucosidase (655 aa).

Substrate is bound at residue 258–259 (WD). E388 acts as the Proton donor in catalysis. Residue 456 to 457 (KQ) participates in substrate binding.

Belongs to the glycosyl hydrolase 65 family.

The enzyme catalyses (5R)-5-O-[alpha-D-glucosyl-(1-&gt;2)-beta-D-galactosyl]-5-hydroxy-L-lysyl-[collagen] + H2O = (5R)-5-O-(beta-D-galactosyl)-5-hydroxy-L-lysyl-[collagen] + D-glucose. Its function is as follows. Catalyzes the hydrolysis of glucose from the disaccharide unit linked to hydroxylysine residues of collagen and collagen-like proteins. The sequence is that of Protein-glucosylgalactosylhydroxylysine glucosidase from Danio rerio (Zebrafish).